Consider the following 439-residue polypeptide: tRNA-2-methylthio-N(6)-dimethylallyladenosine synthase (439 aa).

An MTTase N-terminal domain is found at 2-115 (KGLYIKTYGC…LPELIVKASR (114 aa)). Residues Cys11, Cys47, Cys78, Cys155, Cys159, and Cys162 each coordinate [4Fe-4S] cluster. Residues 141-372 (NSQGSSAFLA…QKLISKQQLE (232 aa)) enclose the Radical SAM core domain. In terms of domain architecture, TRAM spans 375–439 (QSMVGKTIPV…QSSLLGCAFH (65 aa)).

Belongs to the methylthiotransferase family. MiaB subfamily. In terms of assembly, monomer. Requires [4Fe-4S] cluster as cofactor.

It localises to the cytoplasm. It carries out the reaction N(6)-dimethylallyladenosine(37) in tRNA + (sulfur carrier)-SH + AH2 + 2 S-adenosyl-L-methionine = 2-methylsulfanyl-N(6)-dimethylallyladenosine(37) in tRNA + (sulfur carrier)-H + 5'-deoxyadenosine + L-methionine + A + S-adenosyl-L-homocysteine + 2 H(+). In terms of biological role, catalyzes the methylthiolation of N6-(dimethylallyl)adenosine (i(6)A), leading to the formation of 2-methylthio-N6-(dimethylallyl)adenosine (ms(2)i(6)A) at position 37 in tRNAs that read codons beginning with uridine. The polypeptide is tRNA-2-methylthio-N(6)-dimethylallyladenosine synthase (Wolbachia pipientis wMel).